Consider the following 31-residue polypeptide: Relaxin B chain (31 aa).

Gln-1 carries the post-translational modification Pyrrolidone carboxylic acid.

The protein belongs to the insulin family. As to quaternary structure, heterodimer of a B chain and an A chain linked by two disulfide bonds.

The protein resides in the secreted. In terms of biological role, relaxin is an ovarian hormone that acts with estrogen to produce dilatation of the birth canal in many mammals. The protein is Relaxin B chain of Phocoenoides dalli dalli (Dall's porpoise).